The primary structure comprises 230 residues: 2,3-bisphosphoglycerate-dependent phosphoglycerate mutase (230 aa).

Substrate contacts are provided by residues 8–15 (RHGESEWN), 21–22 (TG), R60, 87–90 (ERHY), K98, 114–115 (RR), and 183–184 (GN). The active-site Tele-phosphohistidine intermediate is the H9. Residue E87 is the Proton donor/acceptor of the active site.

It belongs to the phosphoglycerate mutase family. BPG-dependent PGAM subfamily.

The enzyme catalyses (2R)-2-phosphoglycerate = (2R)-3-phosphoglycerate. The protein operates within carbohydrate degradation; glycolysis; pyruvate from D-glyceraldehyde 3-phosphate: step 3/5. Catalyzes the interconversion of 2-phosphoglycerate and 3-phosphoglycerate. The chain is 2,3-bisphosphoglycerate-dependent phosphoglycerate mutase from Streptococcus uberis (strain ATCC BAA-854 / 0140J).